A 317-amino-acid polypeptide reads, in one-letter code: Epidermal growth factor-like protein (317 aa).

The signal sequence occupies residues 1 to 23 (MDFKIFLFLTAIFMIVGVTVSTA). The may be required for E.coli agglutination activity stretch occupies residues 24-33 (TTNPTAPRAY). EGF-like domains follow at residues 93–128 (HCTPDCPSGCGLGNCTAPNVCTCNKGAGFGPDGKCI), 130–161 (VCPGRCLNGQCYGNFCNCNSGFVLEPNGRYCT), 163–195 (GCTRNCGPGGQCVGNNQCSCLSGFALNSQGTCQ), 208–243 (ACEPLCPKGCVNGECVAPGQCRCKSGYALNSSKVCA), 245–280 (KCSQPCYNGFCSAPNVCTCKEGYIKDATSRNGNRCI), and 282–315 (YCAAGCPNGTCSAPNFCICKQGYIKQSKGSNVCV). 18 disulfide bridges follow: cysteine 98/cysteine 107, cysteine 102/cysteine 113, cysteine 115/cysteine 127, cysteine 131/cysteine 140, cysteine 135/cysteine 145, cysteine 147/cysteine 160, cysteine 164/cysteine 174, cysteine 168/cysteine 180, cysteine 182/cysteine 194, cysteine 213/cysteine 222, cysteine 217/cysteine 228, cysteine 230/cysteine 242, cysteine 246/cysteine 255, cysteine 250/cysteine 261, cysteine 263/cysteine 279, cysteine 283/cysteine 292, cysteine 287/cysteine 298, and cysteine 300/cysteine 314.

Its subcellular location is the secreted. Functionally, binds to lipopolysaccharides (LPS) present on the cell walls of Gram-negative bacteria, behaving as a pattern recognition receptor (PRR). Induces bacterial aggregation and enhances their subsequent clearance by the innate immune response. Binds to the inner core oligosaccharides region of rough-type bacterial LPS. Displays activity against the Gram-negative bacterium E.coli. Does not display any activity against the Gram-positive bacterium S.aureus or the fungi C.albicans. This chain is Epidermal growth factor-like protein, found in Holotrichia diomphalia (Korean black chafer).